Reading from the N-terminus, the 20-residue chain is Unknown protein NF040 from 2D-PAGE (20 aa).

One can recognise a TCTP domain in the interval 1–20; the sequence is MKVYTDIFTRDEFLSDSYPM.

The protein belongs to the TCTP family.

The chain is Unknown protein NF040 from 2D-PAGE from Naegleria fowleri (Brain eating amoeba).